The primary structure comprises 119 residues: Protein MGF 110-11L (119 aa).

The N-terminal stretch at 1 to 17 is a signal peptide; sequence MKVLLGLLLGYSVLILA.

This sequence belongs to the asfivirus MGF 110 family.

The protein is Protein MGF 110-11L of Ornithodoros (relapsing fever ticks).